A 682-amino-acid chain; its full sequence is E3 ubiquitin-protein ligase RNF103 (682 aa).

The next 4 helical transmembrane spans lie at 6–26 (FFLLLYFLVLFVLARFFEAIV), 326–346 (LFVLSLVLVNLMAWMDLFITQ), 366–386 (LLIISWLPVLGFLQLPYLDSF), and 411–431 (MFYSSHPALFLSTYLGHGLLI). Acidic residues predominate over residues 525–542 (EEMSESSQDTENDSDSDN). The interval 525–549 (EEMSESSQDTENDSDSDNTDTFSSS) is disordered. The segment at 618–660 (CVVCLENFENGCLLMGLPCGHVFHQNCIVMWLAGGRHCCPVCR) adopts an RING-type zinc-finger fold.

In terms of assembly, interacts with DERL1 and VCP. As to expression, expressed in different tissues including hippocampus, cerebral cortex, heart, kidney, spleen and lung. Expression is increased in hippocampus and frontal cortex after chronic treatment with antidepressants.

The protein localises to the endoplasmic reticulum membrane. It carries out the reaction S-ubiquitinyl-[E2 ubiquitin-conjugating enzyme]-L-cysteine + [acceptor protein]-L-lysine = [E2 ubiquitin-conjugating enzyme]-L-cysteine + N(6)-ubiquitinyl-[acceptor protein]-L-lysine.. Its pathway is protein modification; protein ubiquitination. Functionally, acts as an E2-dependent E3 ubiquitin-protein ligase, probably involved in the ER-associated protein degradation pathway. This chain is E3 ubiquitin-protein ligase RNF103 (Rnf103), found in Rattus norvegicus (Rat).